Reading from the N-terminus, the 321-residue chain is MKLPLLLAIVTTFSVVASTGPFDPEEMLFTFTRCMEDNLEDGPNRLPMLAKWKEWINEPVDSPATQCFGKCVLVRTGLYDPVAQKFDASVIQEQFKAYPSLGEKSKVEAYANAVQQLPSTNNDCAAVFKAYDPVHKAHKDTSKNLFHGNKELTKGLYEKLGKDIRQKKQSYFEFCENKYYPAGSDKRQQLCKIRQYTVLDDALFKEHTDCVMKGIRYITKNNELDAEEVKRDFMQVNKDTKALEKVLNDCKSKEPSNAGEKSWHYYKCLVESSVKDDFKEAFDYREVRSQIYAFNLPKKQVYSKPAVQSQVMEIDGKQCPQ.

Residues 1–17 (MKLPLLLAIVTTFSVVA) form the signal peptide. Disulfide bonds link C34/C71 and C67/C124. W55 is a leukotriene E4 binding site. 2 residues coordinate leukotriene E4: G148 and K167. Intrachain disulfides connect C175–C210, C191–C319, and C250–C268. Residues E176, R194, and H207 each coordinate noradrenaline. Residues D283 and E286 each contribute to the noradrenaline site.

The protein belongs to the PBP/GOBP family. In terms of assembly, (Microbial infection) Interacts with envelope protein of dengue virus type 2. As to expression, saliva (at protein level). Female salivary gland (at protein level). Detected in the head and thorax of the female mosquitoes, where the salivary glands are located. Expressed in the distal-lateral and medial lobes of the female salivary gland but not in the carcass. No or low-level expression in the adult male mosquito tissues.

Its subcellular location is the secreted. Modulates blood feeding of female mosquitoes on vertebrate species by binding and sequestering different mediators involved in the host response, such as biogenic amines and eicosanoids. Binds serotonin, histamine, leukotriene B4, leukotriene C4, leukotriene D4, leukotriene E4, adrenaline and noradrenaline. Does not bind tryptamine and U-46619, a stable analog of thromboxane A2. Exhibits vasodilating activity. Inhibits agonist-induced platelet aggregation but not blood clotting. Inhibits noradrenaline-induced smooth muscle contraction. Promotes an influx of host neutrophils at the inoculation site. Its function is as follows. (Microbial infection) Probably promotes Plasmodium gallinaceum oocyst development in mosquito midgut. Functionally, (Microbial infection) Exhibits antiviral activity against dengue virus type 2 probably through a direct interaction with dengue virus virions. The polypeptide is Long form salivary protein D7L1 (D7) (Aedes aegypti (Yellowfever mosquito)).